A 512-amino-acid chain; its full sequence is Alpha-amylase 1 (512 aa).

The first 25 residues, 1–25 (MRFSTEGFTSKVVAAILAFSRLVSA), serve as a signal peptide directing secretion. A disulfide bridge links Cys-66 with Cys-74. Residue Trp-119 coordinates substrate. Residue Asn-157 coordinates Ca(2+). His-158 contributes to the substrate binding site. Cys-186 and Cys-200 are disulfide-bonded. 2 residues coordinate Ca(2+): Glu-198 and Asp-211. Asn-233 carries an N-linked (GlcNAc...) asparagine glycan. Arg-240 contributes to the substrate binding site. Ca(2+) contacts are provided by Asp-242, His-246, and Glu-266. Asp-242 serves as the catalytic Nucleophile. Substrate is bound at residue 245 to 246 (KH). Glu-266 functions as the Proton donor in the catalytic mechanism. Gly-270 contacts substrate. Cys-276 and Cys-319 form a disulfide bridge. Substrate contacts are provided by Asp-333 and Arg-380. The cysteines at positions 475 and 510 are disulfide-linked.

Belongs to the glycosyl hydrolase 13 family. Requires Ca(2+) as cofactor.

The protein resides in the secreted. It carries out the reaction Endohydrolysis of (1-&gt;4)-alpha-D-glucosidic linkages in polysaccharides containing three or more (1-&gt;4)-alpha-linked D-glucose units.. With respect to regulation, alpha-amylase expression underlies catabolite repression by glucose. The sequence is that of Alpha-amylase 1 (AMY1) from Schwanniomyces occidentalis (Yeast).